We begin with the raw amino-acid sequence, 335 residues long: MNSAFTFLSLAIFPLALFIFWTLSATGPSSPLGRGFPTLTNKRICLLIAHPDDEAMFFAPTLLALTKPELGNHVKILCLSSGMCALLMVLDSASGWFLIYQITGDAAGLGHIRKQELQKSALRLGLRNESDVFIVDDPSRFPDSMTATWSEENVSGLLASAFAPQLAAQASSQSAPMATIDILLTFDQSGVSYHPNHRSLYHGARAFLKALMRGNSGHPCPVTLYTLTSTTLARKYIGVFDAPIAMLSGVISNAFGGSGDRDALSTSPSKKTQELRGIREPPPANRLLFVNSVDDWLSGWKAMVYAHKSQMVWFRWGWITVGRYMVVNDLKKELV.

The chain crosses the membrane as a helical span at residues 3–23 (SAFTFLSLAIFPLALFIFWTL). N-linked (GlcNAc...) asparagine glycosylation is found at N128 and N153.

This sequence belongs to the PIGL family.

The protein localises to the endoplasmic reticulum membrane. It catalyses the reaction a 6-(N-acetyl-alpha-D-glucosaminyl)-1-(1,2-diacyl-sn-glycero-3-phospho)-1D-myo-inositol + H2O = a 6-(alpha-D-glucosaminyl)-1-(1,2-diacyl-sn-glycero-3-phospho)-1D-myo-inositol + acetate. It functions in the pathway glycolipid biosynthesis; glycosylphosphatidylinositol-anchor biosynthesis. In terms of biological role, involved in the second step of GPI biosynthesis. De-N-acetylation of N-acetylglucosaminyl-phosphatidylinositol. This Arthroderma benhamiae (strain ATCC MYA-4681 / CBS 112371) (Trichophyton mentagrophytes) protein is N-acetylglucosaminyl-phosphatidylinositol de-N-acetylase.